The sequence spans 442 residues: GPI mannosyltransferase 1 (442 aa).

The next 8 helical transmembrane spans lie at Ile22–Phe42, Ile95–Tyr115, Leu177–Ile197, Ala242–Phe262, Met307–Val327, Leu336–Ile356, Ile361–Ala381, and Ile408–Leu428.

Belongs to the PIGM family.

Its subcellular location is the endoplasmic reticulum membrane. It functions in the pathway glycolipid biosynthesis; glycosylphosphatidylinositol-anchor biosynthesis. Functionally, mannosyltransferase involved in glycosylphosphatidylinositol-anchor biosynthesis. Transfers the first alpha-1,4-mannose to GlcN-acyl-PI during GPI precursor assembly. This Dictyostelium discoideum (Social amoeba) protein is GPI mannosyltransferase 1 (pigm).